A 74-amino-acid chain; its full sequence is Kappa-scoloptoxin(07)-Ssm2a (74 aa).

Positions 1 to 19 are cleaved as a signal peptide; that stretch reads MLVFYALLFVTVFSNTVMG. Positions 20–41 are excised as a propeptide; the sequence is ATIDKPIPKPILREAIEEIEVN.

Belongs to the scoloptoxin-07 family. In terms of processing, contains 3 disulfide bonds. Expressed by the venom gland.

Its subcellular location is the secreted. In terms of biological role, toxin that inhibits voltage-gated potassium channel currents in DRG neurons (IC(50)=about 570 nM). In vivo, induces neurotoxicity shown by twitching, paralysis, and body contraction. In vivo, insects injected with this toxin showed signs of neurotoxicity including twitching, paralysis, and body contraction. The sequence is that of Kappa-scoloptoxin(07)-Ssm2a from Scolopendra mutilans (Chinese red-headed centipede).